Here is a 345-residue protein sequence, read N- to C-terminus: Beta-ketoacyl-[acyl-carrier-protein] synthase III (345 aa).

Residues Cys114 and His272 contribute to the active site. Positions Gln273 to Arg277 are ACP-binding. Asn302 is an active-site residue.

This sequence belongs to the thiolase-like superfamily. FabH family. As to quaternary structure, homodimer.

Its subcellular location is the cytoplasm. The catalysed reaction is malonyl-[ACP] + acetyl-CoA + H(+) = 3-oxobutanoyl-[ACP] + CO2 + CoA. It participates in lipid metabolism; fatty acid biosynthesis. Catalyzes the condensation reaction of fatty acid synthesis by the addition to an acyl acceptor of two carbons from malonyl-ACP. Catalyzes the first condensation reaction which initiates fatty acid synthesis and may therefore play a role in governing the total rate of fatty acid production. Possesses both acetoacetyl-ACP synthase and acetyl transacylase activities. Its substrate specificity determines the biosynthesis of branched-chain and/or straight-chain of fatty acids. In Rhodopirellula baltica (strain DSM 10527 / NCIMB 13988 / SH1), this protein is Beta-ketoacyl-[acyl-carrier-protein] synthase III.